The following is a 599-amino-acid chain: Elongation factor 4 (599 aa).

Positions 2–184 (KNIRNFSIIA…RLVRDIPPPE (183 aa)) constitute a tr-type G domain. GTP contacts are provided by residues 14–19 (DHGKST) and 131–134 (NKID).

It belongs to the TRAFAC class translation factor GTPase superfamily. Classic translation factor GTPase family. LepA subfamily.

The protein localises to the cell inner membrane. It carries out the reaction GTP + H2O = GDP + phosphate + H(+). Required for accurate and efficient protein synthesis under certain stress conditions. May act as a fidelity factor of the translation reaction, by catalyzing a one-codon backward translocation of tRNAs on improperly translocated ribosomes. Back-translocation proceeds from a post-translocation (POST) complex to a pre-translocation (PRE) complex, thus giving elongation factor G a second chance to translocate the tRNAs correctly. Binds to ribosomes in a GTP-dependent manner. This is Elongation factor 4 from Citrobacter koseri (strain ATCC BAA-895 / CDC 4225-83 / SGSC4696).